A 496-amino-acid polypeptide reads, in one-letter code: Cytochrome P450 71B14 (496 aa).

The chain crosses the membrane as a helical span at residues 1 to 21 (MIWWFIVGASFFFAFILIAKD). Position 436 (cysteine 436) interacts with heme.

It belongs to the cytochrome P450 family. Heme serves as cofactor.

The protein resides in the membrane. In Arabidopsis thaliana (Mouse-ear cress), this protein is Cytochrome P450 71B14 (CYP71B14).